Consider the following 420-residue polypeptide: MAKFDILEDLKWRGAINQETDEEGLRKYLAEHDDLALYCGTDPTGDSLHIGHLIPFMILKRFQMAGYHPVILIGGGTGAIGDPSGRKTERTLQTADQVKHNEECLTNQMKKLFGTENFEIRNNAEWLGKLNLIDFLRDYGKFFQVNNMINKEVVASRLENGISFTEFTYQILQAIDFYHLNKDDGVQLQIGGSDQWGNITAGIDLIHKLEGADRPAFGLTIPLMLKADGTKFGKSAGGAVWLDPEKTSPYEFYQFWINQDDRDVVKYLKYFAFLSREEIEDLAEKTEKEPWKRAAQKRLAEEVTKFVHGEAGLKEAQMITDALFSGNIKNLSVTQIEQGLKNAPSAEAGSEKKNLVDFLVDTKIEPSKRQAREDIKNGAIYVNGDREQSVDFDVDPSSAFDGKYVIIRKGKRKYTLVTIK.

An L-tyrosine-binding site is contributed by tyrosine 38. The short motif at 43–52 (PTGDSLHIGH) is the 'HIGH' region element. The L-tyrosine site is built by tyrosine 169 and glutamine 173. Residues 231–235 (KFGKS) carry the 'KMSKS' region motif. An ATP-binding site is contributed by lysine 234. In terms of domain architecture, S4 RNA-binding spans 353–419 (KNLVDFLVDT…GKRKYTLVTI (67 aa)).

It belongs to the class-I aminoacyl-tRNA synthetase family. TyrS type 1 subfamily. As to quaternary structure, homodimer.

The protein resides in the cytoplasm. The enzyme catalyses tRNA(Tyr) + L-tyrosine + ATP = L-tyrosyl-tRNA(Tyr) + AMP + diphosphate + H(+). In terms of biological role, catalyzes the attachment of tyrosine to tRNA(Tyr) in a two-step reaction: tyrosine is first activated by ATP to form Tyr-AMP and then transferred to the acceptor end of tRNA(Tyr). The protein is Tyrosine--tRNA ligase of Lactobacillus helveticus (strain DPC 4571).